The chain runs to 379 residues: MDFNLTREQELVRQMVREFAENEVKPIAAEIDETERFPMENVKKMGQYGMMGIPFSKEYGGAGGDVLSYIIAVEELSKVCGTTGVILSAHTSLCASLINEHGTEEQKQKYLVPLAKGEKIGAYGLTEPNAGTDSGAQQTVAVLEGDHYVINGSKIFITNGGVADTFVIFAMTDRTKGTKGISAFIIEKGFKGFSIGKVEQKLGIRASSTTELVFEDMIVPVENMIGKEGKGFPIAMKTLDGGRIGIAAQALGIAEGAFNEARAYMKERKQFGRSLDKFQGLAWMMADMDVAIESARYLVYKAAYLKQAGLPYTVDAARAKLHAANVAMDVTTKAVQLFGGYGYTKDYPVERMMRDAKITEIYEGTSEVQKLVISGKIFR.

This sequence belongs to the acyl-CoA dehydrogenase family. The cofactor is FAD.

It carries out the reaction butanoyl-CoA + oxidized [electron-transfer flavoprotein] + H(+) = (2E)-butenoyl-CoA + reduced [electron-transfer flavoprotein]. It catalyses the reaction a short-chain 2,3-saturated fatty acyl-CoA + oxidized [electron-transfer flavoprotein] + H(+) = a short-chain (2E)-enoyl-CoA + reduced [electron-transfer flavoprotein]. The protein operates within lipid metabolism; butanoate metabolism. In Clostridium acetobutylicum (strain ATCC 824 / DSM 792 / JCM 1419 / IAM 19013 / LMG 5710 / NBRC 13948 / NRRL B-527 / VKM B-1787 / 2291 / W), this protein is Acyl-CoA dehydrogenase, short-chain specific (bcd).